Reading from the N-terminus, the 332-residue chain is Glycerol-3-phosphate dehydrogenase [NAD(P)+] (332 aa).

NADPH contacts are provided by S11, F12, K32, and K106. Residues K106, G137, and S139 each contribute to the sn-glycerol 3-phosphate site. Residue A141 participates in NADPH binding. 5 residues coordinate sn-glycerol 3-phosphate: K192, D245, S255, R256, and N257. K192 functions as the Proton acceptor in the catalytic mechanism. R256 is a binding site for NADPH. The NADPH site is built by V280 and E282.

The protein belongs to the NAD-dependent glycerol-3-phosphate dehydrogenase family.

It localises to the cytoplasm. It catalyses the reaction sn-glycerol 3-phosphate + NAD(+) = dihydroxyacetone phosphate + NADH + H(+). The catalysed reaction is sn-glycerol 3-phosphate + NADP(+) = dihydroxyacetone phosphate + NADPH + H(+). It participates in membrane lipid metabolism; glycerophospholipid metabolism. In terms of biological role, catalyzes the reduction of the glycolytic intermediate dihydroxyacetone phosphate (DHAP) to sn-glycerol 3-phosphate (G3P), the key precursor for phospholipid synthesis. The polypeptide is Glycerol-3-phosphate dehydrogenase [NAD(P)+] (Staphylococcus epidermidis (strain ATCC 35984 / DSM 28319 / BCRC 17069 / CCUG 31568 / BM 3577 / RP62A)).